Reading from the N-terminus, the 105-residue chain is Nucleoid-associated protein lin2851 (105 aa).

Residues 1-16 (MRGMGNMQGMMKQMQK) are compositionally biased toward low complexity. Residues 1-23 (MRGMGNMQGMMKQMQKMQKEMAK) form a disordered region.

The protein belongs to the YbaB/EbfC family. As to quaternary structure, homodimer.

It is found in the cytoplasm. The protein resides in the nucleoid. Its function is as follows. Binds to DNA and alters its conformation. May be involved in regulation of gene expression, nucleoid organization and DNA protection. This is Nucleoid-associated protein lin2851 from Listeria innocua serovar 6a (strain ATCC BAA-680 / CLIP 11262).